The sequence spans 79 residues: MTTTKTMLVAFVLTLFFVISSVHCSDGTSGYGITEATKRCFTPAPCTRGLFYCQTFCSSLSAVLIGVCESGICCCILNQ.

Positions 1–24 are cleaved as a signal peptide; sequence MTTTKTMLVAFVLTLFFVISSVHC. Intrachain disulfides connect Cys-40–Cys-75, Cys-46–Cys-68, Cys-53–Cys-73, and Cys-57–Cys-74.

Belongs to the DEFL family.

Its subcellular location is the secreted. The polypeptide is Defensin-like protein 117 (Arabidopsis thaliana (Mouse-ear cress)).